The chain runs to 143 residues: Small ribosomal subunit protein uS11c (143 aa).

The protein belongs to the universal ribosomal protein uS11 family. Part of the 30S ribosomal subunit.

It is found in the plastid. The protein resides in the chloroplast. This is Small ribosomal subunit protein uS11c from Hordeum vulgare (Barley).